The chain runs to 117 residues: Appetite-regulating hormone (117 aa).

Positions 1–23 are cleaved as a signal peptide; it reads MPSLGTMCSLLLFSVLWVDLAMA. Ser26 carries O-decanoyl serine; alternate lipidation. Ser26 is lipidated: O-hexanoyl serine; alternate. The O-octanoyl serine; alternate moiety is linked to residue Ser26. Residues 30–68 form a disordered region; that stretch reads PEHQKLQQRKESKKPPAKLQPRALEGSLGPEDTSQVEEA. The span at 31 to 43 shows a compositional bias: basic and acidic residues; the sequence is EHQKLQQRKESKK. Residues 52-75 constitute a propeptide, removed in mature form; that stretch reads ALEGSLGPEDTSQVEEAEDELEIR. Leu98 carries the post-translational modification Leucine amide. Positions 99-117 are cleaved as a propeptide — removed in mature form; the sequence is GKFLQEVLWEDTNEALADE.

Belongs to the motilin family. Post-translationally, O-octanoylated by GOAT/MBOAT4. O-octanoylation is essential for ghrelin activity. In terms of processing, amidation of Leu-98 is essential for obestatin activity.

It localises to the secreted. Its function is as follows. Ghrelin is the ligand for growth hormone secretagogue receptor type 1 (GHSR). Induces the release of growth hormone from the pituitary. Has an appetite-stimulating effect, induces adiposity and stimulates gastric acid secretion. Involved in growth regulation. Obestatin may be the ligand for GPR39. May have an appetite-reducing effect resulting in decreased food intake. May reduce gastric emptying activity and jejunal motility. This is Appetite-regulating hormone (GHRL) from Canis lupus familiaris (Dog).